The primary structure comprises 271 residues: Cytochrome b termination protein 1 (271 aa).

Its subcellular location is the mitochondrion. Its function is as follows. Involved in 5'-end processing of mitochondrial COB, 15S rRNA, and RPM1 transcript. May also have a role in 3'-end processing of the COB pre-mRNA. This is Cytochrome b termination protein 1 (CBT1) from Saccharomyces cerevisiae (strain ATCC 204508 / S288c) (Baker's yeast).